The following is a 403-amino-acid chain: Betaine--homocysteine S-methyltransferase 1 (403 aa).

In terms of domain architecture, Hcy-binding spans 8–311 (KGLLERLDAG…YHTRAIAEEL (304 aa)). Zn(2+)-binding residues include Cys-214, Cys-296, and Cys-297.

Homotetramer. The cofactor is Zn(2+).

It is found in the cytoplasm. It carries out the reaction L-homocysteine + glycine betaine = N,N-dimethylglycine + L-methionine. Its pathway is amine and polyamine degradation; betaine degradation; sarcosine from betaine: step 1/2. The protein operates within amino-acid biosynthesis; L-methionine biosynthesis via de novo pathway; L-methionine from L-homocysteine (BhmT route): step 1/1. Involved in the regulation of homocysteine metabolism. Converts betaine and homocysteine to dimethylglycine and methionine, respectively. This reaction is also required for the irreversible oxidation of choline. This is Betaine--homocysteine S-methyltransferase 1 (bhmt) from Xenopus laevis (African clawed frog).